We begin with the raw amino-acid sequence, 557 residues long: D-arabinono-1,4-lactone oxidase (557 aa).

The FAD-binding PCMH-type domain occupies Phe-25–Lys-209. Residues Val-58 to Gly-61, His-62 to Ser-63, Ile-144 to Thr-148, Ile-199, and Leu-543 to Lys-546 contribute to the FAD site. A Pros-8alpha-FAD histidine modification is found at His-62.

Belongs to the oxygen-dependent FAD-linked oxidoreductase family. FAD serves as cofactor.

The catalysed reaction is D-arabinono-1,4-lactone + O2 = dehydro-D-arabinono-1,4-lactone + H2O2 + H(+). The enzyme catalyses L-galactono-1,4-lactone + O2 = L-ascorbate + H2O2 + H(+). It catalyses the reaction L-gulono-1,4-lactone + O2 = L-ascorbate + H2O2 + H(+). It carries out the reaction L-xylono-1,4-lactone + O2 = dehydro-L-arabinono-1,4-lactone + H2O2 + H(+). Its pathway is cofactor biosynthesis; D-erythroascorbate biosynthesis; dehydro-D-arabinono-1,4-lactone from D-arabinose: step 2/2. Functionally, D-arabinono-1,4-lactone oxidase that catalyzes the final step of biosynthesis of D-erythroascorbic acid, an important antioxidant and one of the virulence factors enhancing the pathogenicity. Is also able to oxidize L-galactono-1,4-lactone, L-xylono-1,4-lactone and L-gulono-1,4-lactone. In Candida albicans (strain SC5314 / ATCC MYA-2876) (Yeast), this protein is D-arabinono-1,4-lactone oxidase.